Reading from the N-terminus, the 449-residue chain is Ras-related GTP-binding protein D (449 aa).

The tract at residues 1-55 (MSQVLGKPQPQGEDGGEDQEEDELVGLAGYEDGPESSDAELDSGPEEGESRRNSW) is disordered. 2 stretches are compositionally biased toward acidic residues: residues 14–24 (DGGEDQEEDEL) and 32–47 (DGPESSDAELDSGPEE). Residues Arg120, Arg121, Ser122, Gly123, Lys124, Ser125, Ser126, and Thr140 each coordinate GTP. GDP is bound by residues Arg121, Ser122, Gly123, Lys124, Ser125, Ser126, Thr140, Glu144, and Thr146. Residues Thr146, Gly169, His228, Lys229, and Asp231 each coordinate GTP. Residues His228, Lys229, Asp231, Ser269, and Ile270 each coordinate GDP. Ile270 is a binding site for GTP. A disordered region spans residues 428 to 449 (KAQSRLPKKTGATPNGTPRVLL).

This sequence belongs to the GTR/RAG GTP-binding protein family. As to quaternary structure, forms a heterodimer with RRAGA in a sequence-independent manner and RRAGB. Heterodimerization stabilizes RRAG proteins. The GDP-bound form of RRAGD (in complex with the GTP-bound form of RRAGA or RRAGB), interacts with RPTOR, thereby promoting recruitment of mTORC1 to the lysosomes. Component of the lysosomal folliculin complex (LFC), composed of FLCN, FNIP1 (or FNIP2), RagA/RRAGA or RagB/RRAGB GDP-bound, RagC/RRAGC or RagD/RRAGD GTP-bound, and Ragulator. Interacts with NOL8. Interacts with SH3BP4; the interaction with this negative regulator is most probably direct, preferentially occurs with the inactive GDP-bound form of RRAGD and is negatively regulated by amino acids. The Rag heterodimer interacts with SLC38A9; the probable amino acid sensor. Interacts with SESN1, SESN2 and SESN3. The GDP-bound form interacts with TFEB. The GDP-bound form interacts with TFE3. In terms of tissue distribution, expressed in the distal tubule of the kidney.

Its subcellular location is the cytoplasm. It localises to the nucleus. The protein resides in the lysosome membrane. It catalyses the reaction GTP + H2O = GDP + phosphate + H(+). Its activity is regulated as follows. The activation of RagD/RRAGD is mediated by a GTPase activating protein (GAP). In high-amino acid conditions, activated by GTPase activating protein FLCN that stimulates RRAGD GTPase activity to turn it into its active GDP-bound form. In response to amino acid depletion, the GATOR1 complex inactivates RagC/RRAGC by securing the GTP-bound inactive form. Functionally, guanine nucleotide-binding protein that plays a crucial role in the cellular response to amino acid availability through regulation of the mTORC1 signaling cascade. Forms heterodimeric Rag complexes with RagA/RRAGA or RagB/RRAGB and cycles between an inactive GTP-bound and an active GDP-bound form: RagD/RRAGD is in its active form when GDP-bound RagD/RRAGD forms a complex with GTP-bound RagA/RRAGA (or RagB/RRAGB) and in an inactive form when GTP-bound RagD/RRAGD heterodimerizes with GDP-bound RagA/RRAGA (or RagB/RRAGB). In its active form, promotes the recruitment of mTORC1 to the lysosomes and its subsequent activation by the GTPase RHEB. This is a crucial step in the activation of the MTOR signaling cascade by amino acids. Also plays a central role in the non-canonical mTORC1 complex, which acts independently of RHEB and specifically mediates phosphorylation of MiT/TFE factors TFEB and TFE3: GDP-bound RagD/RRAGD mediates recruitment of MiT/TFE factors TFEB and TFE3. This chain is Ras-related GTP-binding protein D, found in Mus musculus (Mouse).